The following is a 1073-amino-acid chain: DNA-directed RNA polymerase subunit beta (1073 aa).

Belongs to the RNA polymerase beta chain family. In terms of assembly, in plastids the minimal PEP RNA polymerase catalytic core is composed of four subunits: alpha, beta, beta', and beta''. When a (nuclear-encoded) sigma factor is associated with the core the holoenzyme is formed, which can initiate transcription.

Its subcellular location is the plastid. It is found in the chloroplast. The catalysed reaction is RNA(n) + a ribonucleoside 5'-triphosphate = RNA(n+1) + diphosphate. Functionally, DNA-dependent RNA polymerase catalyzes the transcription of DNA into RNA using the four ribonucleoside triphosphates as substrates. This is DNA-directed RNA polymerase subunit beta from Aethionema cordifolium (Lebanon stonecress).